The chain runs to 569 residues: MRYSRLFGKTQREIPSDAETISHQLLLRSGMIAQLTAGVYSFMPLAWRSIQKIENIIRQEMNKAGCQELAMPVLQPVEIWQQSGREAPFGQTLFHLKDRKDRNLVLGPTHEEVITDLASRYIQSYRDLPQRLYQIQAKFRDEPRPRGGLIRVREFIMKDMYSFDASPEGLDDSYQTMKQAYESVYRRCGLESMVIDADSGAIGGKASHEFMIVAESGEDSIIYCPKCSYAANAEKAVFKKKTLPKETLKDLEEVATPGQKAISDVARFLAVKPENTLKAVFYMADGKFVMAVIRGDLDINEIKLKNLLKCNDLRLAEDGEVKAAGVVAGSASPVGLKNILIVADDSVENGSNFVAGANKDGFHLKNVNCGRDFRADKMADIALAAEGSACPFCDGTFASKRGVEVGHIFKLGTFLSERFGANFTDAEGVSHPIIMGCYGMGVGRLLAAAIEQNHDEKGIIWPMPIAPYQVYICGLFLDNPVVRESAEKIYAELEAKGIEVLFDDRELTAGVKFNDADLLGIPLRLTISPRNLDKGGVEFKLRRNKESELVPLDSIVERVIATIKSESDL.

This sequence belongs to the class-II aminoacyl-tRNA synthetase family. ProS type 1 subfamily. As to quaternary structure, homodimer.

It localises to the cytoplasm. The enzyme catalyses tRNA(Pro) + L-proline + ATP = L-prolyl-tRNA(Pro) + AMP + diphosphate. In terms of biological role, catalyzes the attachment of proline to tRNA(Pro) in a two-step reaction: proline is first activated by ATP to form Pro-AMP and then transferred to the acceptor end of tRNA(Pro). As ProRS can inadvertently accommodate and process non-cognate amino acids such as alanine and cysteine, to avoid such errors it has two additional distinct editing activities against alanine. One activity is designated as 'pretransfer' editing and involves the tRNA(Pro)-independent hydrolysis of activated Ala-AMP. The other activity is designated 'posttransfer' editing and involves deacylation of mischarged Ala-tRNA(Pro). The misacylated Cys-tRNA(Pro) is not edited by ProRS. This is Proline--tRNA ligase from Dehalococcoides mccartyi (strain CBDB1).